The sequence spans 671 residues: K(+)-insensitive pyrophosphate-energized proton pump (671 aa).

The next 5 helical transmembrane spans lie at 4–24 (LIFTAPLAGLISLTFAAFFAK), 57–77 (TIAVVSVIISLLILFLLDEGL), 79–99 (IAAGFLAGAISSAAAGYIGMS), 128–148 (AVTGLAVIGLALLGTSSLYIL), and 156–176 (VGFGFGASLISLFARAGGGIF). Lys178 is a binding site for substrate. Mg(2+)-binding residues include Asp181, Asp185, Asn208, and Asp211. Helical transmembrane passes span 223 to 243 (LFETYVVTSLAAMLLGSLIIG), 249 to 269 (VLYPLMLGSAAIFASIISVFF), 285 to 305 (GVGGSTVLSLIAFYYITGFLM), 310 to 330 (FFYVTVAGVVITVLMVIVTEY), 365 to 385 (TLVPAVVIAAGILVSYFIVGG), and 393 to 413 (LYGIAIASVAMLSTAGMIVAL). Asp421 lines the Mg(2+) pocket. Helical transmembrane passes span 452–472 (AVTKGYAIGSTALGALALFAD), 490–510 (VVLSGILLGAVLPFLFSAVMM), 558–578 (MAMPGFLAVIIPLLTGFFLGP), and 579–599 (EALAGLLTGLIVVGFMLALMM). Residues Asp607, Asp633, and Asp637 each coordinate Ca(2+). A substrate-binding site is contributed by Lys640. Residues 650 to 670 (LIKVVNMVAILFSPLIIGGGF) traverse the membrane as a helical segment.

Belongs to the H(+)-translocating pyrophosphatase (TC 3.A.10) family. K(+)-insensitive subfamily. As to quaternary structure, homodimer. Mg(2+) is required as a cofactor.

Its subcellular location is the cell membrane. The catalysed reaction is diphosphate + H2O + H(+)(in) = 2 phosphate + 2 H(+)(out). Proton pump that utilizes the energy of pyrophosphate hydrolysis as the driving force for proton movement across the membrane. Generates a proton motive force. The sequence is that of K(+)-insensitive pyrophosphate-energized proton pump from Methanosarcina mazei (strain ATCC BAA-159 / DSM 3647 / Goe1 / Go1 / JCM 11833 / OCM 88) (Methanosarcina frisia).